The following is a 323-amino-acid chain: tRNA U34 carboxymethyltransferase (323 aa).

Carboxy-S-adenosyl-L-methionine-binding positions include K91, W105, K110, G130, 152–154, 181–182, M196, Y200, and R315; these read DPT and IE.

This sequence belongs to the class I-like SAM-binding methyltransferase superfamily. CmoB family. In terms of assembly, homotetramer.

The catalysed reaction is carboxy-S-adenosyl-L-methionine + 5-hydroxyuridine(34) in tRNA = 5-carboxymethoxyuridine(34) in tRNA + S-adenosyl-L-homocysteine + H(+). Its function is as follows. Catalyzes carboxymethyl transfer from carboxy-S-adenosyl-L-methionine (Cx-SAM) to 5-hydroxyuridine (ho5U) to form 5-carboxymethoxyuridine (cmo5U) at position 34 in tRNAs. This chain is tRNA U34 carboxymethyltransferase, found in Salmonella paratyphi A (strain ATCC 9150 / SARB42).